The chain runs to 233 residues: AA9 family lytic polysaccharide monooxygenase A (233 aa).

The N-terminal stretch at 1–17 is a signal peptide; it reads MKLTTSVALLAAAGAQA. Cu(2+) contacts are provided by H18 and H90. 2 cysteine pairs are disulfide-bonded: C59–C180 and C150–C233. N132 is a glycosylation site (N-linked (GlcNAc...) asparagine). O2 contacts are provided by H166 and Q175. Position 177 (Y177) interacts with Cu(2+).

It belongs to the polysaccharide monooxygenase AA9 family. It depends on Cu(2+) as a cofactor.

The protein localises to the secreted. The enzyme catalyses [(1-&gt;4)-beta-D-glucosyl]n+m + reduced acceptor + O2 = 4-dehydro-beta-D-glucosyl-[(1-&gt;4)-beta-D-glucosyl]n-1 + [(1-&gt;4)-beta-D-glucosyl]m + acceptor + H2O.. Lytic polysaccharide monooxygenase (LPMO) that depolymerizes crystalline and amorphous polysaccharides via the oxidation of scissile alpha- or beta-(1-4)-glycosidic bonds, yielding C1 and C4 oxidation products. Catalysis by LPMOs requires the reduction of the active-site copper from Cu(II) to Cu(I) by a reducing agent and H(2)O(2) or O(2) as a cosubstrate. Shows endoglucanase activity on tamarind xyloglucan, as well as on beechwood xylan when combined with phosphoric acid swollen cellulose (PASC). Shows no activity on wheat arabinoxylan, konjac glucomannan, acetylated spruce galactoglucomannan, or cellopentaose. The chain is AA9 family lytic polysaccharide monooxygenase A from Thermothielavioides terrestris (strain ATCC 38088 / NRRL 8126) (Thielavia terrestris).